We begin with the raw amino-acid sequence, 133 residues long: ATP synthase epsilon chain, chloroplastic (133 aa).

Belongs to the ATPase epsilon chain family. F-type ATPases have 2 components, CF(1) - the catalytic core - and CF(0) - the membrane proton channel. CF(1) has five subunits: alpha(3), beta(3), gamma(1), delta(1), epsilon(1). CF(0) has three main subunits: a, b and c.

It localises to the plastid. Its subcellular location is the chloroplast thylakoid membrane. Functionally, produces ATP from ADP in the presence of a proton gradient across the membrane. In Atropa belladonna (Belladonna), this protein is ATP synthase epsilon chain, chloroplastic.